The chain runs to 36 residues: Pancreatic polypeptide (36 aa).

Tyr36 is modified (tyrosine amide).

The protein belongs to the NPY family.

It is found in the secreted. Hormone secreted by pancreatic cells that acts as a regulator of pancreatic and gastrointestinal functions. This is Pancreatic polypeptide (PPY) from Larus argentatus (Herring gull).